A 176-amino-acid polypeptide reads, in one-letter code: Large ribosomal subunit protein uL6 (176 aa).

Residues 151 to 170 (RPPEPYKGKGVRYADEQVRR) show a composition bias toward basic and acidic residues. A disordered region spans residues 151 to 176 (RPPEPYKGKGVRYADEQVRRKEAKKK).

It belongs to the universal ribosomal protein uL6 family. In terms of assembly, part of the 50S ribosomal subunit.

This protein binds to the 23S rRNA, and is important in its secondary structure. It is located near the subunit interface in the base of the L7/L12 stalk, and near the tRNA binding site of the peptidyltransferase center. This Shewanella pealeana (strain ATCC 700345 / ANG-SQ1) protein is Large ribosomal subunit protein uL6.